A 523-amino-acid chain; its full sequence is Synaptotagmin-10 (523 aa).

At 1 to 55 the chain is on the vesicular side; that stretch reads MSFRKEDGVSSLCQKALHIITELCFAGQVEWDKCSGIFPADRSGQGGGGTDISVS. Residues 13–35 are cysteine motif; the sequence is CQKALHIITELCFAGQVEWDKCS. A helical transmembrane segment spans residues 56–76; the sequence is LLAVVVSFCGLALLVVSLFVF. Topologically, residues 77–523 are cytoplasmic; that stretch reads WKLCWPCWKS…CSSPRPPSTP (447 aa). T136 bears the Phosphothreonine mark. 2 consecutive C2 domains span residues 231 to 352 and 363 to 496; these read TCGK…TVWK and DLGE…THWH. Ca(2+) contacts are provided by D262, D268, D320, F321, D322, S325, D328, D394, D400, D454, and D456.

Belongs to the synaptotagmin family. In terms of assembly, homodimer; disulfide-linked via the cysteine motif. Can also form heterodimers with SYT3, SYT6, SYT7 and SYT9. Requires Ca(2+) as cofactor. As to expression, highly expressed in the olfactory bulb.

It is found in the cytoplasmic vesicle. The protein resides in the secretory vesicle membrane. In terms of biological role, ca(2+) sensor specifically required for the Ca(2+)-dependent exocytosis of secretory vesicles containing IGF1 in neurons of the olfactory bulb. Exocytosis of IGF1 is required for sensory perception of smell. Not involved in Ca(2+)-dependent synaptic vesicle exocytosis. Acts through Ca(2+) and phospholipid binding to the C2 domain: Ca(2+) induces binding of the C2-domains to phospholipid membranes and to assembled SNARE-complexes; both actions contribute to triggering exocytosis. This is Synaptotagmin-10 from Mus musculus (Mouse).